Reading from the N-terminus, the 274-residue chain is Penicillin-insensitive murein endopeptidase (274 aa).

The signal sequence occupies residues 1-19; it reads MKKTAIALLAWFVSSASLA. Disulfide bonds link Cys44–Cys265, Cys187–Cys235, and Cys216–Cys223. Residues His110, His113, Asp120, Asp147, His150, and His211 each coordinate Zn(2+). Residues 225–274 are disordered; the sequence is DQPLPPPGDGCGAELQSWFEPPKPGTTKPEKKTPPPLPPSCQALLDEHVL.

The protein belongs to the peptidase M74 family. In terms of assembly, dimer. It depends on Zn(2+) as a cofactor.

Its subcellular location is the periplasm. Its function is as follows. Murein endopeptidase that cleaves the D-alanyl-meso-2,6-diamino-pimelyl amide bond that connects peptidoglycan strands. Likely plays a role in the removal of murein from the sacculus. The protein is Penicillin-insensitive murein endopeptidase of Salmonella arizonae (strain ATCC BAA-731 / CDC346-86 / RSK2980).